We begin with the raw amino-acid sequence, 254 residues long: MTQHPTQSPQFFLTAPSPCPYLDGQFERKVFTHLVGDKASEMNDLLTQGGFRRSQNIAYRPACETCRACVSVRILAQEFTASRNMKRVLQHNSDLVGAMHNAEPSTEQYSLFRSYLDARHRRGGMSDMTVLDYAMMVEDTHVDTKVIEYRRRGPDTFITGKGQGELIAVALTDKMADGLSMVYSYFNPEFEERSLGTFMILDHIARARAMGLPHVYLGYWVNGSRKMNYKMRFMPQEHLGPKGWERYTNEAVSR.

This sequence belongs to the R-transferase family. Bpt subfamily.

The protein localises to the cytoplasm. It catalyses the reaction N-terminal L-glutamyl-[protein] + L-leucyl-tRNA(Leu) = N-terminal L-leucyl-L-glutamyl-[protein] + tRNA(Leu) + H(+). The enzyme catalyses N-terminal L-aspartyl-[protein] + L-leucyl-tRNA(Leu) = N-terminal L-leucyl-L-aspartyl-[protein] + tRNA(Leu) + H(+). Functionally, functions in the N-end rule pathway of protein degradation where it conjugates Leu from its aminoacyl-tRNA to the N-termini of proteins containing an N-terminal aspartate or glutamate. The sequence is that of Aspartate/glutamate leucyltransferase from Mesorhizobium japonicum (strain LMG 29417 / CECT 9101 / MAFF 303099) (Mesorhizobium loti (strain MAFF 303099)).